The primary structure comprises 475 residues: UDP-N-acetylmuramate--L-alanine ligase (475 aa).

Position 119–125 (119–125 (GTHGKTT)) interacts with ATP.

It belongs to the MurCDEF family.

It is found in the cytoplasm. It catalyses the reaction UDP-N-acetyl-alpha-D-muramate + L-alanine + ATP = UDP-N-acetyl-alpha-D-muramoyl-L-alanine + ADP + phosphate + H(+). The protein operates within cell wall biogenesis; peptidoglycan biosynthesis. Functionally, cell wall formation. In Wigglesworthia glossinidia brevipalpis, this protein is UDP-N-acetylmuramate--L-alanine ligase.